Here is a 657-residue protein sequence, read N- to C-terminus: Regulator of MON1-CCZ1 complex (657 aa).

Positions 471-637 (KKEMPHKFVI…NFTPGEHCEE (167 aa)) constitute a Mic1 domain.

This sequence belongs to the RMC1 family. As to quaternary structure, found in a complex with RMC1, CCZ1 MON1A and MON1B.

Its subcellular location is the lysosome membrane. It localises to the late endosome membrane. In terms of biological role, component of the CCZ1-MON1 RAB7A guanine exchange factor (GEF). Acts as a positive regulator of CCZ1-MON1A/B function necessary for endosomal/autophagic flux and efficient RAB7A localization. This is Regulator of MON1-CCZ1 complex from Homo sapiens (Human).